The primary structure comprises 81 residues: Apolipoprotein C-I, acidic form (81 aa).

Positions 1–24 (MRLFLSLLVVVLSIVLEGPTPAQG) are cleaved as a signal peptide.

Belongs to the apolipoprotein C1 family.

Its subcellular location is the secreted. The chain is Apolipoprotein C-I, acidic form (APOC1A) from Cercocebus atys (Sooty mangabey).